Here is a 282-residue protein sequence, read N- to C-terminus: ADP-ribosyl cyclase/cyclic ADP-ribose hydrolase (282 aa).

The signal sequence occupies residues 1-24 (MSPVAIVACVCLAVTLTRISPSEA). 5 disulfide bridges follow: cysteine 39-cysteine 58, cysteine 75-cysteine 155, cysteine 136-cysteine 149, cysteine 230-cysteine 251, and cysteine 263-cysteine 272.

Belongs to the ADP-ribosyl cyclase family. Ovotestis.

Its subcellular location is the cytoplasmic vesicle. The enzyme catalyses NAD(+) = cyclic ADP-beta-D-ribose + nicotinamide + H(+). It carries out the reaction NAD(+) + H2O = ADP-D-ribose + nicotinamide + H(+). The catalysed reaction is nicotinate + NADP(+) = nicotinate-adenine dinucleotide phosphate + nicotinamide. With respect to regulation, activity is presumably regulated by its sequestration in vesicles before egg fertilization. After fertilization and upon NADase release, it could then be regulated via its potential phosphorylation sites. In terms of biological role, synthesizes cyclic ADP-ribose (cADPR), a second messenger for calcium mobilization from endoplasmic reticulum. Might make the Ca(2+) mobilizer nicotinate-adenine dinucleotide phosphate. Does not have cADPR hydrolase activity. The protein is ADP-ribosyl cyclase/cyclic ADP-ribose hydrolase of Aplysia kurodai (Kuroda's sea hare).